A 386-amino-acid polypeptide reads, in one-letter code: 3-ketoacyl-CoA thiolase (386 aa).

The active-site Acyl-thioester intermediate is Cys91. Catalysis depends on proton acceptor residues His342 and Cys372.

The protein belongs to the thiolase-like superfamily. Thiolase family. In terms of assembly, heterotetramer of two alpha chains (FadB) and two beta chains (FadA).

The protein resides in the cytoplasm. The catalysed reaction is an acyl-CoA + acetyl-CoA = a 3-oxoacyl-CoA + CoA. It functions in the pathway lipid metabolism; fatty acid beta-oxidation. Catalyzes the final step of fatty acid oxidation in which acetyl-CoA is released and the CoA ester of a fatty acid two carbons shorter is formed. This Colwellia psychrerythraea (strain 34H / ATCC BAA-681) (Vibrio psychroerythus) protein is 3-ketoacyl-CoA thiolase.